Reading from the N-terminus, the 272-residue chain is Probable FKBP-type peptidyl-prolyl cis-trans isomerase FkpA (272 aa).

The first 20 residues, 1 to 20, serve as a signal peptide directing secretion; the sequence is MNTIFKISALTLSAALALSA. Cysteine 21 carries N-palmitoyl cysteine lipidation. Cysteine 21 carries S-diacylglycerol cysteine lipidation. Residues 29-40 are compositionally biased toward low complexity; the sequence is ASASEPAAASSA. Residues 29-48 are disordered; that stretch reads ASASEPAAASSAQGDTSSIG. One can recognise a PPIase FKBP-type domain in the interval 167–253; the sequence is DDIVTVEYEG…VFDVKLVKIG (87 aa).

It belongs to the FKBP-type PPIase family.

The protein resides in the cell membrane. It catalyses the reaction [protein]-peptidylproline (omega=180) = [protein]-peptidylproline (omega=0). In Neisseria meningitidis serogroup B (strain ATCC BAA-335 / MC58), this protein is Probable FKBP-type peptidyl-prolyl cis-trans isomerase FkpA (fkpA).